The primary structure comprises 22 residues: Hemoglobinase-like protein 2 (22 aa).

It belongs to the peptidase C13 family.

The enzyme catalyses Hydrolysis of proteins and small molecule substrates at -Asn-|-Xaa- bonds.. The polypeptide is Hemoglobinase-like protein 2 (Fasciola hepatica (Liver fluke)).